A 116-amino-acid polypeptide reads, in one-letter code: Large ribosomal subunit protein uL18 (116 aa).

This sequence belongs to the universal ribosomal protein uL18 family. In terms of assembly, part of the 50S ribosomal subunit; part of the 5S rRNA/L5/L18/L25 subcomplex. Contacts the 5S and 23S rRNAs.

In terms of biological role, this is one of the proteins that bind and probably mediate the attachment of the 5S RNA into the large ribosomal subunit, where it forms part of the central protuberance. The chain is Large ribosomal subunit protein uL18 from Shewanella sp. (strain ANA-3).